The chain runs to 200 residues: Probable GTP-binding protein EngB (200 aa).

Residues 25 to 199 enclose the EngB-type G domain; that stretch reads SGYEVAFAGR…ISVLDRWYEW (175 aa). GTP-binding positions include 33-40, 60-64, 78-81, 145-148, and 178-180; these read GRSNAGKS, GRTQL, DLPG, TKAD, and FSS. Positions 40 and 62 each coordinate Mg(2+).

It belongs to the TRAFAC class TrmE-Era-EngA-EngB-Septin-like GTPase superfamily. EngB GTPase family. Mg(2+) serves as cofactor.

In terms of biological role, necessary for normal cell division and for the maintenance of normal septation. This chain is Probable GTP-binding protein EngB, found in Legionella pneumophila (strain Paris).